A 134-amino-acid polypeptide reads, in one-letter code: Phosphoribosyl-AMP cyclohydrolase (134 aa).

Residue D78 participates in Mg(2+) binding. C79 serves as a coordination point for Zn(2+). Residues D80 and D82 each coordinate Mg(2+). Zn(2+)-binding residues include C96 and C103.

It belongs to the PRA-CH family. As to quaternary structure, homodimer. The cofactor is Mg(2+). It depends on Zn(2+) as a cofactor.

Its subcellular location is the cytoplasm. The catalysed reaction is 1-(5-phospho-beta-D-ribosyl)-5'-AMP + H2O = 1-(5-phospho-beta-D-ribosyl)-5-[(5-phospho-beta-D-ribosylamino)methylideneamino]imidazole-4-carboxamide. Its pathway is amino-acid biosynthesis; L-histidine biosynthesis; L-histidine from 5-phospho-alpha-D-ribose 1-diphosphate: step 3/9. Catalyzes the hydrolysis of the adenine ring of phosphoribosyl-AMP. This Cupriavidus necator (strain ATCC 17699 / DSM 428 / KCTC 22496 / NCIMB 10442 / H16 / Stanier 337) (Ralstonia eutropha) protein is Phosphoribosyl-AMP cyclohydrolase.